We begin with the raw amino-acid sequence, 251 residues long: Flap endonuclease Xni (251 aa).

Positions 51–72 (EDDRSDSWRHQSLPDYKAGRSP) are disordered. Residue D104 participates in Mg(2+) binding. Residues 160 to 249 (VLPHQLPDYW…LSGNLQQLRL (90 aa)) form the 5'-3' exonuclease domain. Positions 171, 172, 180, 182, and 185 each coordinate K(+). Residues 184 to 189 (GIGAKT) form an interaction with DNA region.

This sequence belongs to the Xni family. The cofactor is Mg(2+). It depends on K(+) as a cofactor.

Has flap endonuclease activity. During DNA replication, flap endonucleases cleave the 5'-overhanging flap structure that is generated by displacement synthesis when DNA polymerase encounters the 5'-end of a downstream Okazaki fragment. In Yersinia enterocolitica serotype O:8 / biotype 1B (strain NCTC 13174 / 8081), this protein is Flap endonuclease Xni.